The primary structure comprises 89 residues: Large ribosomal subunit protein bL27 (89 aa).

Residues 1–23 form a disordered region; that stretch reads MAHKKAGGSSRNGRDSHSKRLGV.

The protein belongs to the bacterial ribosomal protein bL27 family.

This Mesorhizobium japonicum (strain LMG 29417 / CECT 9101 / MAFF 303099) (Mesorhizobium loti (strain MAFF 303099)) protein is Large ribosomal subunit protein bL27.